An 87-amino-acid chain; its full sequence is Small ribosomal subunit protein bS20 (87 aa).

The protein belongs to the bacterial ribosomal protein bS20 family.

Its function is as follows. Binds directly to 16S ribosomal RNA. This Sphingopyxis alaskensis (strain DSM 13593 / LMG 18877 / RB2256) (Sphingomonas alaskensis) protein is Small ribosomal subunit protein bS20.